The chain runs to 115 residues: uncharacterized protein (115 aa).

Residues 1 to 115 (MGVEISLDPP…ETVIKLSAAE (115 aa)) form the MSP domain.

This is an uncharacterized protein from Caenorhabditis elegans.